The sequence spans 212 residues: Ropporin-1 (212 aa).

In terms of domain architecture, RIIa spans 12–49 (PELPKMLKEFAKAAIRAQPQDLIQWGADYFEALSRGET). Position 56 is a phosphoserine (Ser-56). Positions 209-212 (VWLE) are interaction with RHPN1.

It belongs to the ropporin family. In terms of assembly, homodimer. Interacts with AKAP3. May interact with SPA17. Interacts with RHPN1. Interacts with FSCB; the interaction increases upon spermatozoa capacitation conditions. Interacts with CFAP61. In terms of processing, sumoylated, sumoylation decreases upon spermatozoa capacitation conditions.

It is found in the cell projection. Its subcellular location is the cilium. The protein resides in the flagellum. Functionally, important for male fertility. With ROPN1L, involved in fibrous sheath integrity and sperm motility, plays a role in PKA-dependent signaling processes required for spermatozoa capacitation. This is Ropporin-1 (ROPN1) from Macaca fascicularis (Crab-eating macaque).